Here is a 237-residue protein sequence, read N- to C-terminus: MRSGVIAQKLGMTRVYNDAGEHVPVTVLRMENCHVVAQRTVEKNGYTAVQLGVGMAKVKNTSKAMRGHFAKAEVEPKAKLAEFRVSPDNLLEVGVEITAEHFVAGQKVDVTGTSIGKGFAGVMKRHNFGGHRASHGNSITHRSHGSTGQRQDPGKVFKGKKMAGHMGQTRVTTQNIEVVSTDSDRGLILVRGAVPGSKGAWILVRDAVKASLPENAPKPAGLRAGAKAEAAATEGGE.

Disordered regions lie at residues 133-155 (ASHG…DPGK) and 213-237 (PENA…EGGE). Over residues 135 to 150 (HGNSITHRSHGSTGQR) the composition is skewed to polar residues. Gln151 is subject to N5-methylglutamine. Over residues 220–237 (AGLRAGAKAEAAATEGGE) the composition is skewed to low complexity.

It belongs to the universal ribosomal protein uL3 family. Part of the 50S ribosomal subunit. Forms a cluster with proteins L14 and L19. Post-translationally, methylated by PrmB.

One of the primary rRNA binding proteins, it binds directly near the 3'-end of the 23S rRNA, where it nucleates assembly of the 50S subunit. The polypeptide is Large ribosomal subunit protein uL3 (Brucella abortus (strain S19)).